Consider the following 125-residue polypeptide: UPF0231 protein APP7_1023 (125 aa).

Belongs to the UPF0231 family.

The chain is UPF0231 protein APP7_1023 from Actinobacillus pleuropneumoniae serotype 7 (strain AP76).